A 137-amino-acid polypeptide reads, in one-letter code: Large ribosomal subunit protein uL16 (137 aa).

Over residues 1–17 the composition is skewed to basic residues; that stretch reads MLQPKRTKFRKTHKGRN. The interval 1–24 is disordered; sequence MLQPKRTKFRKTHKGRNRGLANTG.

Belongs to the universal ribosomal protein uL16 family. Part of the 50S ribosomal subunit.

Functionally, binds 23S rRNA and is also seen to make contacts with the A and possibly P site tRNAs. This is Large ribosomal subunit protein uL16 from Aeromonas salmonicida (strain A449).